A 350-amino-acid chain; its full sequence is Protein pelota homolog (350 aa).

The protein belongs to the eukaryotic release factor 1 family. Pelota subfamily. As to quaternary structure, monomer. Requires a divalent metal cation as cofactor.

The protein localises to the cytoplasm. In terms of biological role, may function in recognizing stalled ribosomes, interact with stem-loop structures in stalled mRNA molecules, and effect endonucleolytic cleavage of the mRNA. May play a role in the release non-functional ribosomes and degradation of damaged mRNAs. Has endoribonuclease activity. The polypeptide is Protein pelota homolog (Methanosarcina mazei (strain ATCC BAA-159 / DSM 3647 / Goe1 / Go1 / JCM 11833 / OCM 88) (Methanosarcina frisia)).